A 305-amino-acid polypeptide reads, in one-letter code: Homoserine O-acetyltransferase (305 aa).

Cys-142 functions as the Acyl-thioester intermediate in the catalytic mechanism. Substrate contacts are provided by Lys-163 and Ser-192. The active-site Proton acceptor is the His-235. Residue Glu-237 is part of the active site. Position 249 (Arg-249) interacts with substrate.

The protein belongs to the MetA family.

The protein localises to the cytoplasm. The catalysed reaction is L-homoserine + acetyl-CoA = O-acetyl-L-homoserine + CoA. The protein operates within amino-acid biosynthesis; L-methionine biosynthesis via de novo pathway; O-acetyl-L-homoserine from L-homoserine: step 1/1. In terms of biological role, transfers an acetyl group from acetyl-CoA to L-homoserine, forming acetyl-L-homoserine. This Phocaeicola vulgatus (strain ATCC 8482 / DSM 1447 / JCM 5826 / CCUG 4940 / NBRC 14291 / NCTC 11154) (Bacteroides vulgatus) protein is Homoserine O-acetyltransferase.